Consider the following 306-residue polypeptide: uncharacterized protein (306 aa).

The next 8 helical transmembrane spans lie at 7–27 (LESW…GYLA), 30–50 (VGII…FMAL), 68–88 (LFIT…LFAL), 95–115 (ADHV…TLFI), 144–164 (AIGV…LMSF), 194–214 (IGAI…VLSV), 232–252 (IAIM…GLIF), and 274–294 (TIPF…NVAP).

It is found in the cell membrane. This is an uncharacterized protein from Mycoplasma genitalium (strain ATCC 33530 / DSM 19775 / NCTC 10195 / G37) (Mycoplasmoides genitalium).